Reading from the N-terminus, the 1865-residue chain is MTRWVPTKREEKYGVAFYNYDARGADELSLQIGDTVHILETYEGWYRGYTLRKKSKKGIFPASYIHLKEAIVEGKGQHETVIPGDLPLIQEVTTTLREWSTIWRQLYVQDNREMFRSVRHMIYDLIEWRSQILSGTLPQDELKELKKKVTAKIDYGNRILDLDLVVRDEDGNILDPELTSTISLFRAHEIASKQVEERLQEEKSQKQNIDINRQAKFAATPSLALFVNLKNVVCKIGEDAEVLMSLYDPVESKFISENYLVRWSSSGLPKDIDRLHNLRAVFTDLGSKDLKREKISFVCQIVRVGRMELRDNNTRKLTSGLRRPFGVAVMDVTDIINGKVDDEDKQHFIPFQPVAGENDFLQTVINKVIAAKEVNHKGQGLWVTLKLLPGDIHQIRKEFPHLVDRTTAVARKTGFPEIIMPGDVRNDIYVTLVQGDFDKGSKTTAKNVEVTVSVYDEDGKRLEHVIFPGAGDEAISEYKSVIYYQVKQPRWFETVKVAIPIEDVNRSHLRFTFRHRSSQDSKDKSEKIFALAFVKLMRYDGTTLRDGEHDLIVYKAEAKKLEDAATYLSLPSTKAELEEKGHSATGKSMQSLGSCTISKDSFQISTLVCSTKLTQNVDLLGLLKWRSNTSLLQQNLRQLMKVDGGEVVKFLQDTLDALFNIMMENSESETFDTLVFDALVFIIGLIADRKFQHFNPVLETYIKKHFSATLAYTKLTKVLKNYVDGAEKPGVNEQLYKAMKALESIFKFIVRSRILFNQLYENKGEADFVESLLQLFRSINDMMSSMSDQTVRVKGAALKYLPTIVNDVKLVFDPKELSKMFTEFILNVPMGLLTIQKLYCLIEIVHSDLFTQHDCREILLPMMTDQLKYHLERQEDLEACCQLLSHILEVLYRKDVGPTQRHVQIIMEKLLRTVNRTVISMGRDSELIGNFVACMTAILRQMEDYHYAHLIKTFGKMRTDVVDFLMETFIMFKNLIGKNVYPFDWVIMNMVQNKVFLRAINQYADMLNKKFLDQANFELQLWNNYFHLAVAFLTQESLQLENFSSAKRAKILNKYGDMRRQIGFEIRDMWYNLGQHKIKFIPEMVGPILEMTLIPETELRKATIPIFFDMMQCEFHSTRSFQMFENEIITKLDHEVEGGRGDEQYKVLFDKILLEHCRKHKYLAKTGETFVKLVVRLMERLLDYRTIMHDENKENRMSCTVNVLNFYKEIEREEMYIRYLYKLCDLHKECDNYTEAAYTLLLHAKLLKWSEDVCVAHLTQRDGYQATTQGQLKEQLYQEIIHYFDKGKMWEEAIALGKELAEQYENEMFDYEQLSELLKKQAQFYENIVKVIRPKPDYFAVGYYGQGFPTFLRGKVFIYRGKEYERREDFEARLLTQFPNAEKMKTTSPPGDDIKNSPGQYIQCFTVKPKLDLPPKFHRPVSEQIVSFYRVNEVQRFEYSRPIRKGEKNPDNEFANMWIERTIYTTAYKLPGILRWFEVKSVFMVEISPLENAIETMQLTNDKINSMVQQHLDDPSLPINPLSMLLNGIVDPAVMGGFANYEKAFFTDRYLQEHPEAHEKIEKLKDLIAWQIPFLAEGIRIHGDKVTEALRPFHERMEACFKQLKEKVEKEYGVRIMPSSLDDRRGSRPRSMVRSFTMPSSSRPLSVASVSSLSSDSTPSRPGSDGFALEPLLPKKMHSRSQDKLDKDDLEKEKKDKKKEKRNSKHQEIFEKEFKPTDISLQQSEAVILSETISPLRPQRPKSQVMNVIGSERRFSVSPSSPSSQQTPPPVTPRAKLSFSMQSSLELNGMTGADVADVPPPLPLKGSVADYGNLMENQDLLGSPTPPPPPPHQRHLPPPLPSKTPPPPPPKTTRKQASVDSGIVQ.

The SH3 domain maps to 9–70; sequence REEKYGVAFY…PASYIHLKEA (62 aa). Residues 425–609 form the C2 DOCK-type domain; the sequence is RNDIYVTLVQ…DSFQISTLVC (185 aa). The DOCKER domain maps to 1207–1617; sequence YKEIEREEMY…VEKEYGVRIM (411 aa). Disordered regions lie at residues 1619–1716 and 1732–1865; these read SSLD…EFKP and TISP…GIVQ. Low complexity predominate over residues 1639-1666; that stretch reads PSSSRPLSVASVSSLSSDSTPSRPGSDG. Basic and acidic residues predominate over residues 1680–1694; the sequence is RSQDKLDKDDLEKEK. The residue at position 1681 (Ser1681) is a Phosphoserine. A phosphoinositide-binding region spans residues 1687-1695; that stretch reads KDDLEKEKK. Basic residues predominate over residues 1695-1704; that stretch reads KDKKKEKRNS. Residues 1705–1716 show a composition bias toward basic and acidic residues; the sequence is KHQEIFEKEFKP. Residues Ser1743, Ser1751, Ser1756, Ser1761, and Ser1764 each carry the phosphoserine modification. Residues 1756–1766 show a composition bias toward low complexity; the sequence is SVSPSSPSSQQ. Phosphothreonine occurs at positions 1767 and 1772. Residues 1793 to 1819 are interaction with NCK2 second and third SH3 domain (minor); it reads ADVADVPPPLPLKGSVADYGNLMENQD. An SH3-binding; interaction with CRK motif is present at residues 1799-1805; the sequence is PPPLPLK. Residues 1820-1836 form an interaction with NCK2 third SH3 domain (major) region; the sequence is LLGSPTPPPPPPHQRHL. Residues 1824–1851 show a composition bias toward pro residues; the sequence is PTPPPPPPHQRHLPPPLPSKTPPPPPPK. The interaction with NCK2 (minor) stretch occupies residues 1837-1852; sequence PPPLPSKTPPPPPPKT. Residues 1838-1843 carry the SH3-binding; interaction with CRK motif; that stretch reads PPLPSK. The segment covering 1855–1865 has biased composition (polar residues); the sequence is KQASVDSGIVQ. Residue Ser1858 is modified to Phosphoserine.

This sequence belongs to the DOCK family. In terms of assembly, interacts with the SH3 domains of CRK and NCK2 via multiple sites. Interacts with nucleotide-free RAC1 via its DOCKER domain. Interacts with ELMO1, ELMO2 and probably ELMO3 via its SH3 domain. Interacts with ADGRB1. Identified in a complex with AUTS2 and ELMO2. Highly expressed in placenta, lung, kidney, pancreas and ovary. Expressed at intermediate level in thymus, testes and colon.

It is found in the cytoplasm. The protein localises to the membrane. Involved in cytoskeletal rearrangements required for phagocytosis of apoptotic cells and cell motility. Along with DOCK1, mediates CRK/CRKL regulation of epithelial and endothelial cell spreading and migration on type IV collagen. Functions as a guanine nucleotide exchange factor (GEF), which activates Rac Rho small GTPases by exchanging bound GDP for free GTP. Its GEF activity may be enhanced by ELMO1. This chain is Dedicator of cytokinesis protein 1 (DOCK1), found in Homo sapiens (Human).